We begin with the raw amino-acid sequence, 362 residues long: Chorismate synthase (362 aa).

Residues R48 and R54 each contribute to the NADP(+) site. FMN-binding positions include R131–S133, N243–A244, G287, K302–S306, and R328.

This sequence belongs to the chorismate synthase family. Homotetramer. The cofactor is FMNH2.

It carries out the reaction 5-O-(1-carboxyvinyl)-3-phosphoshikimate = chorismate + phosphate. It functions in the pathway metabolic intermediate biosynthesis; chorismate biosynthesis; chorismate from D-erythrose 4-phosphate and phosphoenolpyruvate: step 7/7. In terms of biological role, catalyzes the anti-1,4-elimination of the C-3 phosphate and the C-6 proR hydrogen from 5-enolpyruvylshikimate-3-phosphate (EPSP) to yield chorismate, which is the branch point compound that serves as the starting substrate for the three terminal pathways of aromatic amino acid biosynthesis. This reaction introduces a second double bond into the aromatic ring system. The sequence is that of Chorismate synthase from Rhodopseudomonas palustris (strain BisB18).